The chain runs to 288 residues: 4-diphosphocytidyl-2-C-methyl-D-erythritol kinase (288 aa).

The active site involves K11. P100–S110 lines the ATP pocket. The active site involves D140.

It belongs to the GHMP kinase family. IspE subfamily.

It carries out the reaction 4-CDP-2-C-methyl-D-erythritol + ATP = 4-CDP-2-C-methyl-D-erythritol 2-phosphate + ADP + H(+). It participates in isoprenoid biosynthesis; isopentenyl diphosphate biosynthesis via DXP pathway; isopentenyl diphosphate from 1-deoxy-D-xylulose 5-phosphate: step 3/6. Catalyzes the phosphorylation of the position 2 hydroxy group of 4-diphosphocytidyl-2C-methyl-D-erythritol. This is 4-diphosphocytidyl-2-C-methyl-D-erythritol kinase from Wolbachia pipientis wMel.